A 407-amino-acid chain; its full sequence is P2X receptor D (407 aa).

Topologically, residues 1 to 22 are cytoplasmic; the sequence is MDWDNIFSYNTAKIVTIKDRRL. The chain crosses the membrane as a helical span at residues 23-43; sequence GGLHIIFMVLIIVYIVIYSTI. The Lumenal segment spans residues 44 to 300; that stretch reads YKKGYLLTET…IQNGEIGSFN (257 aa). The interval 283–296 is pore-forming motif; the sequence is RHGIRLIFIQNGEI. A helical transmembrane segment spans residues 301-321; it reads FQALLLTFVSGLGLLAISTVL. Residues 322-407 are Cytoplasmic-facing; the sequence is VDQLAIRFLP…QNIQNNNIIL (86 aa). Residues 371–394 form a disordered region; sequence KNNENNNNNDDYNDDDNEIFDDNN. The span at 381-391 shows a compositional bias: acidic residues; it reads DYNDDDNEIFD.

This sequence belongs to the P2X receptor family.

The protein resides in the contractile vacuole membrane. Functionally, P2X receptors are ligand-gated ion channels that play a role in intracellular calcium signaling. ATP does not evoke inward currents in p2xD. Not essential for osmoregulation. The protein is P2X receptor D (p2xD) of Dictyostelium discoideum (Social amoeba).